Reading from the N-terminus, the 499-residue chain is MSYNFTGTPTGEGTGGNSLTTDLNTQFDLANMGWIGVASAGVWIMVPGIGLLYSGLSRKKHALSLLWASMMASAVCIFQWFFWGYSLAFSHNTRGNGFIGTLEFFGFRNVLGAPSSVSSLPDILFAVYQGMFAAVTGALMLGGACERARLFPMMVFLFLWMTIVYCPIACWVWNAEGWLVKLGSLDYAGGLCVHLTSGHGGLVYALILGKRNDPVTRKGMPKYKPHSVTSVVLGTVFLWFGWMFFNGGSAGNATIRAWYSIMSTNLAAACGGLTWMVIDYFRCGRKWTTVGLCSGIIAGLVGITPAAGFVPIWSAVVIGVVTGAGCNLAVDLKSLLRIDDGLDCYSIHGVGGCIGSVLTGIFAADYVNATAGSYISPIDGGWINHHYKQVGYQLAGICAALAWTVTVTSILLLTMNAIPFLKLRLSADEEELGTDAAQIGEFTYEESTAYIPEPIRSKTSAQMPPPHENIDDKIVGNTDAEKNSTPSDASSTKNTDHIV.

At 1–31 (MSYNFTGTPTGEGTGGNSLTTDLNTQFDLAN) the chain is on the extracellular side. Residue asparagine 4 is glycosylated (N-linked (GlcNAc...) asparagine). Residues 32–52 (MGWIGVASAGVWIMVPGIGLL) traverse the membrane as a helical segment. The Cytoplasmic segment spans residues 53–62 (YSGLSRKKHA). The chain crosses the membrane as a helical span at residues 63–83 (LSLLWASMMASAVCIFQWFFW). Residues 84–122 (GYSLAFSHNTRGNGFIGTLEFFGFRNVLGAPSSVSSLPD) lie on the Extracellular side of the membrane. The helical transmembrane segment at 123–143 (ILFAVYQGMFAAVTGALMLGG) threads the bilayer. The Cytoplasmic segment spans residues 144 to 152 (ACERARLFP). Residues 153–173 (MMVFLFLWMTIVYCPIACWVW) traverse the membrane as a helical segment. Residues 174–187 (NAEGWLVKLGSLDY) lie on the Extracellular side of the membrane. A helical membrane pass occupies residues 188–208 (AGGLCVHLTSGHGGLVYALIL). Residues 209-230 (GKRNDPVTRKGMPKYKPHSVTS) are Cytoplasmic-facing. Residues 231-251 (VVLGTVFLWFGWMFFNGGSAG) traverse the membrane as a helical segment. Topologically, residues 252–257 (NATIRA) are extracellular. Residues 258 to 278 (WYSIMSTNLAAACGGLTWMVI) form a helical membrane-spanning segment. Residues 279-289 (DYFRCGRKWTT) lie on the Cytoplasmic side of the membrane. Residues 290 to 312 (VGLCSGIIAGLVGITPAAGFVPI) traverse the membrane as a helical segment. Residues 313–315 (WSA) lie on the Extracellular side of the membrane. Residues 316-338 (VVIGVVTGAGCNLAVDLKSLLRI) traverse the membrane as a helical segment. Over 339–346 (DDGLDCYS) the chain is Cytoplasmic. A helical membrane pass occupies residues 347–367 (IHGVGGCIGSVLTGIFAADYV). Over 368 to 393 (NATAGSYISPIDGGWINHHYKQVGYQ) the chain is Extracellular. The helical transmembrane segment at 394 to 414 (LAGICAALAWTVTVTSILLLT) threads the bilayer. Residues 415-499 (MNAIPFLKLR…SSTKNTDHIV (85 aa)) lie on the Cytoplasmic side of the membrane. The interval 428 to 441 (DEEELGTDAAQIGE) is enhancer domain. The segment at 442–449 (FTYEESTA) is linker domain. Residues 450–485 (YIPEPIRSKTSAQMPPPHENIDDKIVGNTDAEKNST) form an autoinhibitory domain region. Positions 455–499 (IRSKTSAQMPPPHENIDDKIVGNTDAEKNSTPSDASSTKNTDHIV) are disordered. A Phosphoserine modification is found at serine 457. Positions 468–482 (ENIDDKIVGNTDAEK) are enriched in basic and acidic residues. Polar residues predominate over residues 483 to 493 (NSTPSDASSTK).

The protein belongs to the ammonia transporter channel (TC 1.A.11.2) family. In terms of processing, phosphorylated at Ser-457 by the TORC1 effector kinase NPR1 under nitrogen-limiting conditions which causes a conformational change in the C-terminal region (CTR) to form an open active conformation. Supplementation of nitrogen source leads to inactivation and instant Ser-457 dephosphorylation via plasma membrane PSR1 and PSR2 redundant phosphatases. Post-translationally, the residue Asn-4 of the protein's N-terminal tail is the only site that is glycosylated.

The protein localises to the cell membrane. In terms of biological role, transporter for ammonium (both charged and uncharged NH3 and NH4) to use as a nitrogen source. The affinity of MEP2 is about twenty times higher than that of MEP1. MEP3 has the lowest affinity. Under ammonium limitation acts as an ammonium sensor, generating a signal that leads to pseudohyphal (filamentous) growth. In Saccharomyces cerevisiae (strain ATCC 204508 / S288c) (Baker's yeast), this protein is Ammonium transporter MEP2.